Here is a 519-residue protein sequence, read N- to C-terminus: MIPDVSQALSWLESHPNALDGIRRGIERETLRVTPEGHLATTPHPAVLGKALTHPWITTDFAESLLEFITPVDGSIDHMLTFLSDIHRYVARNLGDERMWPLSMPCFIGSEQDIILAQYGSSNLGRFKTLYREGLKNRYGALMQTISGVHYNFSLPLSFWQARAGVQDADSGKAAISDGYFRLIRNYYRFGWVIPYLFGASPAICSSFLNGRESALPFERRGGTLFLPYATSLRLSDLGYTNKSQSNLGITFNHLNQYVEGLKRAIHTPSAEFARLGVEESGHYHQLNANILQIENELYAPIRPKRVTRDGESPSDALLRGGVEYIEVRSLDINPFTPIGVDADQARFLDLFLIWCVLADAPEMSSDELLCTRQNWNRVILEGRKPGQTIGIGCHDARQPLAYVGQSLFADLHRVAEVLDGINGDARYQQVCARLVAAFEDVSLTYSARVVAQMGERGIGGYGLTLAQHYRDRLCSEPLALLDETTLAVQAQRSVTRQAALESQSCESFASYLRQHAGG.

This sequence belongs to the glutamate--cysteine ligase type 1 family. Type 1 subfamily.

It carries out the reaction L-cysteine + L-glutamate + ATP = gamma-L-glutamyl-L-cysteine + ADP + phosphate + H(+). It functions in the pathway sulfur metabolism; glutathione biosynthesis; glutathione from L-cysteine and L-glutamate: step 1/2. This chain is Glutamate--cysteine ligase, found in Edwardsiella ictaluri (strain 93-146).